A 380-amino-acid polypeptide reads, in one-letter code: Acyl-coenzyme A diphosphatase NUDT19 (380 aa).

In terms of domain architecture, Nudix hydrolase spans 8–264; it reads WKEAATLIVA…KIWIPPPQFY (257 aa). The Nudix box signature appears at 115–136; that stretch reads SLIPGEVATRICAIRETFEESG. Residues glutamate 130 and glutamate 134 each contribute to the Mg(2+) site. Positions 378–380 match the Microbody targeting signal motif; sequence NKL.

The protein belongs to the Nudix hydrolase family. In terms of assembly, monomer. The cofactor is Mg(2+). It depends on Mn(2+) as a cofactor.

It localises to the peroxisome. The enzyme catalyses an acyl-CoA + H2O = an acyl-4'-phosphopantetheine + adenosine 3',5'-bisphosphate + 2 H(+). It carries out the reaction CoA + H2O = (R)-4'-phosphopantetheine + adenosine 3',5'-bisphosphate + 2 H(+). It catalyses the reaction hexanoyl-CoA + H2O = hexanoyl-4'-phosphopantetheine + adenosine 3',5'-bisphosphate + 2 H(+). The catalysed reaction is octanoyl-CoA + H2O = S-octanoyl-4'-phosphopantetheine + adenosine 3',5'-bisphosphate + 2 H(+). The enzyme catalyses butanoyl-CoA + H2O = S-butanoyl-4'-phosphopantetheine + adenosine 3',5'-bisphosphate + 2 H(+). It carries out the reaction propanoyl-CoA + H2O = propanoyl-4'-phosphopantetheine + adenosine 3',5'-bisphosphate + 2 H(+). It catalyses the reaction malonyl-CoA + H2O = malonyl-4'-phosphopantetheine + adenosine 3',5'-bisphosphate + 2 H(+). The catalysed reaction is succinyl-CoA + H2O = succinyl-4'-phosphopantetheine + adenosine 3',5'-bisphosphate + 2 H(+). The enzyme catalyses choloyl-CoA + H2O = S-choloyl-4'-phosphopantetheine + adenosine 3',5'-bisphosphate + 2 H(+). It carries out the reaction 4,8-dimethylnonanoyl-CoA + H2O = S-(4,8-dimethylnonanoyl)-4'-phosphopantetheine + adenosine 3',5'-bisphosphate + 2 H(+). It catalyses the reaction (9Z,12Z,15Z)-octadecatrienoyl-CoA + H2O = S-(9Z,12Z,15Z-octadecatrienoyl)-4'-phosphopantetheine + adenosine 3',5'-bisphosphate + 2 H(+). The catalysed reaction is (9Z,12Z)-octadecadienoyl-CoA + H2O = S-(9Z,12Z-octadecadienoyl)-4'-phosphopantetheine + adenosine 3',5'-bisphosphate + 2 H(+). The enzyme catalyses (9Z)-hexadecenoyl-CoA + H2O = S-(9Z-hexadecenoyl)-4'-phosphopantetheine + adenosine 3',5'-bisphosphate + 2 H(+). It carries out the reaction (9Z)-tetradecenoyl-CoA + H2O = S-(9Z-tetradecenoyl)-4'-phosphopantetheine + adenosine 3',5'-bisphosphate + 2 H(+). It catalyses the reaction (6Z)-octenoyl-CoA + H2O = S-(6Z-octenoyl)-4'-phosphopantetheine + adenosine 3',5'-bisphosphate + 2 H(+). The catalysed reaction is hexadecanoyl-CoA + H2O = S-hexadecanoyl-4'-phosphopantetheine + adenosine 3',5'-bisphosphate + 2 H(+). The enzyme catalyses tetradecanoyl-CoA + H2O = tetradecanoyl-4'-phosphopantetheine + adenosine 3',5'-bisphosphate + 2 H(+). It carries out the reaction dodecanoyl-CoA + H2O = S-dodecanoyl-4'-phosphopantetheine + adenosine 3',5'-bisphosphate + 2 H(+). It catalyses the reaction a 5'-end CoA-ribonucleoside in mRNA + H2O = a 5'-end phospho-adenosine-phospho-ribonucleoside in mRNA + (R)-4'-phosphopantetheine + 2 H(+). In terms of biological role, fatty acyl-coenzyme A (CoA) diphosphatase that hydrolyzes fatty acyl-CoA to yield acyl-4'-phosphopantetheine and adenosine 3',5'-bisphosphate. Mediates the hydrolysis of a wide range of CoA esters, including choloyl-CoA and branched-chain fatty-acyl-CoA esters and at low substrate concentrations medium and long-chain fatty-acyl-CoA esters are the primary substrates. Highest activity seen with medium-chain acyl-CoA esters and higher rates of activity seen with the unsaturated acyl-CoA esters compared with the saturated esters. Exhibits decapping activity towards dpCoA-capped RNAs in vitro. The chain is Acyl-coenzyme A diphosphatase NUDT19 (nudt19) from Xenopus laevis (African clawed frog).